The primary structure comprises 183 residues: MAPRTTRKDQFLERVVGINRVSKVGRRFSFTALVVVGDGDGTVGVGYGKAKEVPAAIQKAVEEAKKSFFRVPRVGSTIPHLVQGEDAAGVVLLRPASPGTAVIAGGPVRAVLECAGIHDVLSKSMGSVNAINIVRGTVEGLKKLKSPQAVAARRGKALDEIAPHAMLRTMENDRAQKSAKAGA.

The region spanning 11–71 (FLERVVGINR…EEAKKSFFRV (61 aa)) is the S5 DRBM domain.

It belongs to the universal ribosomal protein uS5 family. In terms of assembly, part of the 30S ribosomal subunit. Contacts proteins S4 and S8.

With S4 and S12 plays an important role in translational accuracy. Functionally, located at the back of the 30S subunit body where it stabilizes the conformation of the head with respect to the body. This chain is Small ribosomal subunit protein uS5, found in Micrococcus luteus (Micrococcus lysodeikticus).